The sequence spans 245 residues: MDGTRTSLDIEEYSDTEVQKNQVLTLEEWQDKWVNGKTAFHQEQGHQLLKKHLDTFLKGKSGLRVFFPLCGKAVEMKWFADRGHSVVGVEISELGIQEFFTEQNLSYSEEPITEIPGTKVFKSSSGNISLYCCSIFDLPRTNIGKFDMIWDRGALVAINPGDRKCYADTMFSLLGKKFQYLLCVLSYDPTKHPGPPFYVPHAEIERLFGKICNIRCLEKVDAFEERHKSWGIDCLFEKLYLLTEK.

Ser14 carries the post-translational modification Phosphoserine. 29-40 (WQDKWVNGKTAF) serves as a coordination point for S-adenosyl-L-methionine. Substrate is bound at residue Phe40. Position 58 is an N6-acetyllysine (Lys58). Residues Leu69, Glu90, 134 to 135 (SI), and Arg152 each bind S-adenosyl-L-methionine.

This sequence belongs to the class I-like SAM-binding methyltransferase superfamily. TPMT family. As to quaternary structure, monomer.

The protein resides in the cytoplasm. It catalyses the reaction S-adenosyl-L-methionine + a thiopurine = S-adenosyl-L-homocysteine + a thiopurine S-methylether.. The catalysed reaction is mercaptopurine + S-adenosyl-L-methionine = 6-methylthiopurine + S-adenosyl-L-homocysteine + H(+). It carries out the reaction 6-thioguanine + S-adenosyl-L-methionine = 6-methylthioguanine + S-adenosyl-L-homocysteine + H(+). With respect to regulation, inhibited by S-adenosyl-L-homocysteine (SAH). In terms of biological role, catalyzes the S-methylation of thiopurine drugs such as 6-mercaptopurine (also called mercaptopurine, 6-MP or its brand name Purinethol) and 6-thioguanine (also called tioguanine or 6-TG) using S-adenosyl-L-methionine as the methyl donor. TPMT activity modulates the cytotoxic effects of thiopurine prodrugs. A natural substrate for this enzyme has yet to be identified. The chain is Thiopurine S-methyltransferase (TPMT) from Homo sapiens (Human).